A 194-amino-acid chain; its full sequence is Glycerol-3-phosphate acyltransferase (194 aa).

The next 5 helical transmembrane spans lie at leucine 7 to cysteine 27, leucine 59 to glycine 79, glycine 86 to glycine 106, alanine 116 to valine 136, and alanine 157 to isoleucine 177.

Belongs to the PlsY family. Probably interacts with PlsX.

It is found in the cell inner membrane. It catalyses the reaction an acyl phosphate + sn-glycerol 3-phosphate = a 1-acyl-sn-glycero-3-phosphate + phosphate. It functions in the pathway lipid metabolism; phospholipid metabolism. Catalyzes the transfer of an acyl group from acyl-phosphate (acyl-PO(4)) to glycerol-3-phosphate (G3P) to form lysophosphatidic acid (LPA). This enzyme utilizes acyl-phosphate as fatty acyl donor, but not acyl-CoA or acyl-ACP. This chain is Glycerol-3-phosphate acyltransferase, found in Hahella chejuensis (strain KCTC 2396).